We begin with the raw amino-acid sequence, 723 residues long: Fatty acid oxidation complex subunit alpha (723 aa).

The segment at 1–189 (MIYQANTLQV…KVGLLDAIVE (189 aa)) is enoyl-CoA hydratase/isomerase. Asp296 is a substrate binding site. The tract at residues 311–723 (NKATERAAVL…FYDGQQASSL (413 aa)) is 3-hydroxyacyl-CoA dehydrogenase. NAD(+)-binding positions include Met325, Asp344, 401 to 403 (VVE), Lys408, and Ser430. His451 acts as the For 3-hydroxyacyl-CoA dehydrogenase activity in catalysis. Asn454 serves as a coordination point for NAD(+). 2 residues coordinate substrate: Asn501 and Tyr661.

In the N-terminal section; belongs to the enoyl-CoA hydratase/isomerase family. The protein in the C-terminal section; belongs to the 3-hydroxyacyl-CoA dehydrogenase family. In terms of assembly, heterotetramer of two alpha chains (FadB) and two beta chains (FadA).

The enzyme catalyses a (3S)-3-hydroxyacyl-CoA + NAD(+) = a 3-oxoacyl-CoA + NADH + H(+). The catalysed reaction is a (3S)-3-hydroxyacyl-CoA = a (2E)-enoyl-CoA + H2O. It carries out the reaction a 4-saturated-(3S)-3-hydroxyacyl-CoA = a (3E)-enoyl-CoA + H2O. It catalyses the reaction (3S)-3-hydroxybutanoyl-CoA = (3R)-3-hydroxybutanoyl-CoA. The enzyme catalyses a (3Z)-enoyl-CoA = a 4-saturated (2E)-enoyl-CoA. The catalysed reaction is a (3E)-enoyl-CoA = a 4-saturated (2E)-enoyl-CoA. The protein operates within lipid metabolism; fatty acid beta-oxidation. In terms of biological role, involved in the aerobic and anaerobic degradation of long-chain fatty acids via beta-oxidation cycle. Catalyzes the formation of 3-oxoacyl-CoA from enoyl-CoA via L-3-hydroxyacyl-CoA. It can also use D-3-hydroxyacyl-CoA and cis-3-enoyl-CoA as substrate. This is Fatty acid oxidation complex subunit alpha from Vibrio atlanticus (strain LGP32) (Vibrio splendidus (strain Mel32)).